Consider the following 920-residue polypeptide: GTPase activating protein homolog 1 (920 aa).

Over residues Asn65–Ser87 the composition is skewed to low complexity. A disordered region spans residues Asn65 to Ser91. One can recognise an F-BAR domain in the interval Leu90–Asp344. A coiled-coil region spans residues Leu184 to Glu276. Positions Thr403–Gln449 are enriched in low complexity. 2 disordered regions span residues Thr403–Arg468 and Ser490–Ser518. Polar residues predominate over residues Val450–Arg468. Residues Ser490–Asn513 show a composition bias toward low complexity. The Rho-GAP domain maps to Val533 to Lys716. The disordered stretch occupies residues Pro727–Ser836. Residues Pro730–Asp741 are compositionally biased toward acidic residues. The span at Asn757 to Ser836 shows a compositional bias: low complexity.

The protein resides in the cytoplasm. It localises to the contractile vacuole. In terms of biological role, rho GTPase-activating protein involved in the signal transduction pathway. Regulator of the contractile vacuole network as well as involved in driving vacuole emptying. This Dictyostelium discoideum (Social amoeba) protein is GTPase activating protein homolog 1 (mgp1).